A 459-amino-acid chain; its full sequence is Putrescine aminotransferase (459 aa).

Residues 150 to 151 (GT) and Q274 each bind pyridoxal 5'-phosphate. The residue at position 300 (K300) is an N6-(pyridoxal phosphate)lysine. T332 contacts pyridoxal 5'-phosphate.

Belongs to the class-III pyridoxal-phosphate-dependent aminotransferase family. Putrescine aminotransferase subfamily. Pyridoxal 5'-phosphate is required as a cofactor.

It catalyses the reaction an alkane-alpha,omega-diamine + 2-oxoglutarate = an omega-aminoaldehyde + L-glutamate. The enzyme catalyses putrescine + 2-oxoglutarate = 1-pyrroline + L-glutamate + H2O. The catalysed reaction is cadaverine + 2-oxoglutarate = 5-aminopentanal + L-glutamate. Its pathway is amine and polyamine degradation; putrescine degradation; 4-aminobutanal from putrescine (transaminase route): step 1/1. Catalyzes the aminotransferase reaction from putrescine to 2-oxoglutarate, leading to glutamate and 4-aminobutanal, which spontaneously cyclizes to form 1-pyrroline. This is the first step in one of two pathways for putrescine degradation, where putrescine is converted into 4-aminobutanoate (gamma-aminobutyrate or GABA) via 4-aminobutanal. Also functions as a cadaverine transaminase in a a L-lysine degradation pathway to succinate that proceeds via cadaverine, glutarate and L-2-hydroxyglutarate. This chain is Putrescine aminotransferase, found in Enterobacter sp. (strain 638).